A 350-amino-acid chain; its full sequence is Ferrochelatase (350 aa).

Residues H220 and E301 each coordinate Fe cation.

This sequence belongs to the ferrochelatase family.

It is found in the cytoplasm. The catalysed reaction is heme b + 2 H(+) = protoporphyrin IX + Fe(2+). Its pathway is porphyrin-containing compound metabolism; protoheme biosynthesis; protoheme from protoporphyrin-IX: step 1/1. Its function is as follows. Catalyzes the ferrous insertion into protoporphyrin IX. This is Ferrochelatase from Brucella anthropi (strain ATCC 49188 / DSM 6882 / CCUG 24695 / JCM 21032 / LMG 3331 / NBRC 15819 / NCTC 12168 / Alc 37) (Ochrobactrum anthropi).